The primary structure comprises 88 residues: Cell division topological specificity factor (88 aa).

The protein belongs to the MinE family.

Prevents the cell division inhibition by proteins MinC and MinD at internal division sites while permitting inhibition at polar sites. This ensures cell division at the proper site by restricting the formation of a division septum at the midpoint of the long axis of the cell. This is Cell division topological specificity factor from Paracidovorax citrulli (strain AAC00-1) (Acidovorax citrulli).